Consider the following 748-residue polypeptide: MSNPGGRRNGPVKLRLTVLCAKNLVKKDFFRLPDPFAKVVVDGSGQCHSTDTVKNTLDPKWNQHYDLYIGKSDSVTISVWNHKKIHKKQGAGFLGCVRLLSNAINRLKDTGYQRLDLCKLGPNDNDTVRGQIVVSLQSRDRIGTGGQVVDCSRLFDNDLPDGWEERRTASGRIQYLNHITRTTQWERPTRPASEYSSPGRPLSCFVDENTPISGTNGATCGQSSDPRLAERRVRSQRHRNYMSRTHLHTPPDLPEGYEQRTTQQGQVYFLHTQTGVSTWHDPRVPRDLSNINCEELGPLPPGWEIRNTATGRVYFVDHNNRTTQFTDPRLSANLHLVLNRQNQLKDQQQQQVVSLCPDDTECLTVPRYKRDLVQKLKILRQELSQQQPQAGHCRIEVSREEIFEESYRQVMKMRPKDLWKRLMIKFRGEEGLDYGGVAREWLYLLSHEMLNPYYGLFQYSRDDIYTLQINPDSAVNPEHLSYFHFVGRIMGMAVFHGHYIDGGFTLPFYKQLLGKSITLDDMELVDPDLHNSLVWILENDITGVLDHTFCVEHNAYGEIIQHELKPNGKSIPVNEENKKEYVRLYVNWRFLRGIEAQFLALQKGFNEVIPQHLLKTFDEKELELIICGLGKIDVNDWKVNTRLKHCTPDSNIVKWFWKAVEFFDEERRARLLQFVTGSSRVPLQGFKALQGAAGPRLFTIHQIDACTNNLPKAHTCFNRIDIPPYESYEKLYEKLLTAIEETCGFAVE.

The C2 domain occupies 1 to 119; that stretch reads MSNPGGRRNG…TGYQRLDLCK (119 aa). A Glycyl lysine isopeptide (Lys-Gly) (interchain with G-Cter in ubiquitin) cross-link involves residue Lys119. WW domains are found at residues 157–190, 251–284, and 297–330; these read NDLP…RPTR, PDLP…DPRV, and GPLP…DPRL. Residues 414 to 748 form the HECT domain; the sequence is RPKDLWKRLM…IEETCGFAVE (335 aa). Cys716 (glycyl thioester intermediate) is an active-site residue.

In terms of assembly, interacts (via WW domains) with SMAD1. Interacts (via WW domains) with SMAD2 (via PY-motif). Interacts (via WW domains) with SMAD3 (via PY-motif). Interacts with SMAD6. Interacts with SMAD7 (via PY-motif) and TGFBR1; SMAD7 recruits SMURF2 to the TGF-beta receptor and regulates its degradation. Does not interact with SMAD4; SMAD4 lacks a PY-motif. Interacts with AIMP1. Interacts with SNON. Interacts with STAMBP and RNF11. May interact with NDFIP1 and NDFIP2; this interaction induces the E3 ubiquitin-protein ligase activity. Interacts with TTC3. (Microbial infection) Interacts (via WW domains) with EBOV and MARV VP40 (via PPXY motif); the interaction facilitates VP40 virus-like particle budding. In terms of processing, auto-ubiquitinated and ubiquitinated in the presence of RNF11 and UBE2D1. Ubiquitinated by the SCF(FBXL15) complex and TTC3, leading to its degradation by the proteasome. 'Lys-48'-linked polyubiquitination mediated by TRAF4 at Lys-119 leads to SMURF2 proteasomal degradation. As to expression, widely expressed.

Its subcellular location is the nucleus. It is found in the cytoplasm. It localises to the cell membrane. The protein localises to the membrane raft. It carries out the reaction S-ubiquitinyl-[E2 ubiquitin-conjugating enzyme]-L-cysteine + [acceptor protein]-L-lysine = [E2 ubiquitin-conjugating enzyme]-L-cysteine + N(6)-ubiquitinyl-[acceptor protein]-L-lysine.. It functions in the pathway protein modification; protein ubiquitination. Its activity is regulated as follows. Activated by NDFIP1- and NDFIP2-binding. In terms of biological role, E3 ubiquitin-protein ligase which accepts ubiquitin from an E2 ubiquitin-conjugating enzyme in the form of a thioester and then directly transfers the ubiquitin to targeted substrates. Interacts with SMAD7 to trigger SMAD7-mediated transforming growth factor beta/TGF-beta receptor ubiquitin-dependent degradation, thereby down-regulating TGF-beta signaling. In addition, interaction with SMAD7 activates autocatalytic degradation, which is prevented by interaction with AIMP1. Also forms a stable complex with TGF-beta receptor-mediated phosphorylated SMAD1, SMAD2 and SMAD3, and targets SMAD1 and SMAD2 for ubiquitination and proteasome-mediated degradation. SMAD2 may recruit substrates, such as SNON, for ubiquitin-dependent degradation. Negatively regulates TGFB1-induced epithelial-mesenchymal transition and myofibroblast differentiation. (Microbial infection) In case of filoviruses Ebola/EBOV and Marburg/MARV infection, the complex formed by viral matrix protein VP40 and SMURF2 facilitates virus budding. This Homo sapiens (Human) protein is E3 ubiquitin-protein ligase SMURF2.